A 563-amino-acid polypeptide reads, in one-letter code: Arginine--tRNA ligase (563 aa).

A 'HIGH' region motif is present at residues 123 to 133 (PNIAKDMHVGH).

Belongs to the class-I aminoacyl-tRNA synthetase family. In terms of assembly, monomer.

The protein localises to the cytoplasm. The enzyme catalyses tRNA(Arg) + L-arginine + ATP = L-arginyl-tRNA(Arg) + AMP + diphosphate. This is Arginine--tRNA ligase from Chlamydia trachomatis serovar A (strain ATCC VR-571B / DSM 19440 / HAR-13).